A 365-amino-acid chain; its full sequence is MKNHHYLLLTPGPLTTTKTVKEVMLYDWCTWDTEYNELVQEIRKRLVSLATKEEEYYTTVFMQGSGTFSVESVIGSVIPQEGKLLVCTNGAYGKRIVQIATTLHINVVESYTNEWEPTNLAEVEEILQKDSEITHIAVVHCETTTGIINPIADVCRLGKQYGKVTIVDAMSSFGGVEMDVADLQIDFMISSANKCIQGVPGFGFVIAKRTELEQCKGRARSLSLDLYDQWETMELQNGKWRFTSPTHTVRAFYQALLELEEEGGVKARNTRYRNNQQVLVKRMREVGFEPLLDEAYQSPIITSFLYPGEGFTFQQLYEELKEHGFVIYPGKISKVDTFRIGNIGDVYESDIHQLVDCISEGVVIG.

Lys-194 is subject to N6-(pyridoxal phosphate)lysine.

Belongs to the class-V pyridoxal-phosphate-dependent aminotransferase family. PhnW subfamily. As to quaternary structure, homodimer. Pyridoxal 5'-phosphate serves as cofactor.

It carries out the reaction (2-aminoethyl)phosphonate + pyruvate = phosphonoacetaldehyde + L-alanine. In terms of biological role, involved in phosphonate degradation. In Bacillus cytotoxicus (strain DSM 22905 / CIP 110041 / 391-98 / NVH 391-98), this protein is 2-aminoethylphosphonate--pyruvate transaminase.